The following is a 48-amino-acid chain: Glycine-rich RNA-binding protein 3 (48 aa).

The polypeptide is Glycine-rich RNA-binding protein 3 (Populus euphratica (Euphrates poplar)).